The primary structure comprises 212 residues: Putative aryl-alcohol dehydrogenase AAD6 (212 aa).

The active-site Proton donor is tyrosine 76.

This sequence belongs to the aldo/keto reductase family. Aldo/keto reductase 2 subfamily.

The chain is Putative aryl-alcohol dehydrogenase AAD6 from Saccharomyces cerevisiae (strain ATCC 204508 / S288c) (Baker's yeast).